Here is a 456-residue protein sequence, read N- to C-terminus: NADPH-ferredoxin reductase FprA (456 aa).

Serine 17, glutamate 43, leucine 51, and valine 87 together coordinate FAD. NADP(+) contacts are provided by residues arginine 113, 158-161 (NGNV), 202-203 (RR), and glutamate 214. FAD-binding positions include tryptophan 362 and 369–371 (GVI). Glycine 369 serves as a coordination point for NADP(+).

Belongs to the ferredoxin--NADP reductase type 1 family. Monomer. It depends on FAD as a cofactor.

It carries out the reaction 2 reduced [2Fe-2S]-[ferredoxin] + NADP(+) + H(+) = 2 oxidized [2Fe-2S]-[ferredoxin] + NADPH. Its function is as follows. May serve as electron transfer protein and supply electrons to P450 systems. This Mycobacterium leprae (strain TN) protein is NADPH-ferredoxin reductase FprA (fprA).